The chain runs to 209 residues: Large ribosomal subunit protein bL9 (209 aa).

The disordered stretch occupies residues 181–209; the sequence is EASEEGQELAAQREATEDAGADESEETEA. The segment covering 197-209 has biased composition (acidic residues); sequence EDAGADESEETEA.

This sequence belongs to the bacterial ribosomal protein bL9 family.

In terms of biological role, binds to the 23S rRNA. The chain is Large ribosomal subunit protein bL9 from Maricaulis maris (strain MCS10) (Caulobacter maris).